The primary structure comprises 126 residues: Histone H2B 1/2/3/4/6 (126 aa).

Over residues 1 to 12 the composition is skewed to low complexity; sequence MPEPAKSAPAPK. Residues 1-36 form a disordered region; sequence MPEPAKSAPAPKKGSKKAVTKTQKKGDKKRKKSRKE. Lysine 6 and lysine 13 each carry N6-acetyllysine. Basic residues predominate over residues 13 to 34; sequence KGSKKAVTKTQKKGDKKRKKSR. Serine 15 is subject to Phosphoserine. Residues lysine 16 and lysine 21 each carry the N6-acetyllysine modification. Residue lysine 121 forms a Glycyl lysine isopeptide (Lys-Gly) (interchain with G-Cter in ubiquitin) linkage.

It belongs to the histone H2B family. As to quaternary structure, the nucleosome is a histone octamer containing two molecules each of H2A, H2B, H3 and H4 assembled in one H3-H4 heterotetramer and two H2A-H2B heterodimers. The octamer wraps approximately 147 bp of DNA. Monoubiquitination of Lys-121 by the BRE1 gives a specific tag for epigenetic transcriptional activation and is also prerequisite for histone H3 'Lys-4' and 'Lys-79' methylation. In terms of processing, phosphorylated on Ser-15 during apoptosis; which facilitates apoptotic chromatin condensation.

The protein localises to the nucleus. The protein resides in the chromosome. Functionally, core component of nucleosome. Nucleosomes wrap and compact DNA into chromatin, limiting DNA accessibility to the cellular machineries which require DNA as a template. Histones thereby play a central role in transcription regulation, DNA repair, DNA replication and chromosomal stability. DNA accessibility is regulated via a complex set of post-translational modifications of histones, also called histone code, and nucleosome remodeling. Has broad-spectrum antibacterial activity. May be important in the antimicrobial defenses of chick reproductive system during follicle development in the ovary and egg formation in the oviduct. This chain is Histone H2B 1/2/3/4/6 (H2B-I), found in Gallus gallus (Chicken).